A 204-amino-acid chain; its full sequence is Large ribosomal subunit protein uL22c (204 aa).

This sequence belongs to the universal ribosomal protein uL22 family. Part of the 50S ribosomal subunit.

It localises to the plastid. Its subcellular location is the chloroplast. In terms of biological role, this protein binds specifically to 23S rRNA. Its function is as follows. The globular domain of the protein is located near the polypeptide exit tunnel on the outside of the subunit, while an extended beta-hairpin is found that lines the wall of the exit tunnel in the center of the 70S ribosome. The sequence is that of Large ribosomal subunit protein uL22c (rpl22) from Pisum sativum (Garden pea).